Here is a 372-residue protein sequence, read N- to C-terminus: Tribbles homolog 1 (372 aa).

Disordered stretches follow at residues 1–26 (MRVG…FPAA) and 49–85 (RLSE…CVSS). Over residues 59 to 74 (YLSPPGSPCSPQPPPS) the composition is skewed to pro residues. Positions 91–338 (IADYLLLPLA…APQILLHPWF (248 aa)) constitute a Protein kinase domain. A COP1-binding motif is present at residues 355–360 (DQIVPE).

The protein belongs to the protein kinase superfamily. CAMK Ser/Thr protein kinase family. Tribbles subfamily. Monomer. Interacts (via protein kinase domain) with CEBPA. Interacts with COP1.

In terms of biological role, adapter protein involved in protein degradation by interacting with COP1 ubiquitin ligase. Promotes CEBPA degradation and inhibits its function. Controls macrophage, eosinophil and neutrophil differentiation via the COP1-binding domain. Regulates myeloid cell differentiation by altering the expression of CEBPA in a COP1-dependent manner. Interacts with MAPK kinases and regulates activation of MAP kinases, but has no kinase activity. In Mus musculus (Mouse), this protein is Tribbles homolog 1.